Reading from the N-terminus, the 612-residue chain is Anaerobic magnesium-protoporphyrin IX monomethyl ester cyclase (612 aa).

Positions 9–143 (NYHSGGAEIA…KAYEADNFAE (135 aa)) constitute a B12-binding domain. Positions 190 to 417 (PLGVRVAIPN…MKPKALTRGE (228 aa)) constitute a Radical SAM core domain. [4Fe-4S] cluster-binding residues include Cys204, Cys208, and Cys211.

This sequence belongs to the BchE family. [4Fe-4S] cluster is required as a cofactor. Adenosylcob(III)alamin serves as cofactor.

The catalysed reaction is Mg-protoporphyrin IX 13-monomethyl ester + 3 S-adenosyl-L-methionine + H2O = 3,8-divinyl protochlorophyllide a + 3 5'-deoxyadenosine + 3 L-methionine + 4 H(+). The protein operates within porphyrin-containing compound metabolism; bacteriochlorophyll biosynthesis (light-independent). Its function is as follows. Involved in the tetrapyrrole biosynthetic pathways leading to chlorophyll and bacteriochlorophyll (BChl). Catalyzes the anaerobic formation of the isocyclic ring (E-ring) in Mg-protoporphyrin monomethyl ester (MPE) to yield protochlorophyllide a (PChlide a) via a six-electron oxidation and the formation of an oxo group at position C13 using oxygen from a water molecule. The chain is Anaerobic magnesium-protoporphyrin IX monomethyl ester cyclase from Cereibacter sphaeroides (strain ATCC 17023 / DSM 158 / JCM 6121 / CCUG 31486 / LMG 2827 / NBRC 12203 / NCIMB 8253 / ATH 2.4.1.) (Rhodobacter sphaeroides).